A 294-amino-acid polypeptide reads, in one-letter code: Protoheme IX farnesyltransferase (294 aa).

The next 9 helical transmembrane spans lie at 8–28, 35–55, 81–101, 107–127, 133–153, 163–183, 209–226, 230–252, and 266–286; these read LTKP…FLIA, YSLF…GCVL, IFLN…FLFL, VLTI…YSLW, IYSI…GYCA, LMLL…IAIL, MVVY…FTVM, SYIF…FYGY, and FLLS…DHIL.

This sequence belongs to the UbiA prenyltransferase family. Protoheme IX farnesyltransferase subfamily.

Its subcellular location is the cell inner membrane. The catalysed reaction is heme b + (2E,6E)-farnesyl diphosphate + H2O = Fe(II)-heme o + diphosphate. It functions in the pathway porphyrin-containing compound metabolism; heme O biosynthesis; heme O from protoheme: step 1/1. In terms of biological role, converts heme B (protoheme IX) to heme O by substitution of the vinyl group on carbon 2 of heme B porphyrin ring with a hydroxyethyl farnesyl side group. The protein is Protoheme IX farnesyltransferase of Blochmanniella pennsylvanica (strain BPEN).